The chain runs to 202 residues: Probable host range protein 2-2 (202 aa).

The protein belongs to the poxviridae C7 protein family.

In terms of biological role, plays a role for multiplication of the virus in different cell types. The chain is Probable host range protein 2-2 from Oryctolagus cuniculus (Rabbit).